A 505-amino-acid chain; its full sequence is Trans-cinnamate 4-monooxygenase (505 aa).

Residues L3 to I23 form a helical membrane-spanning segment. (E)-cinnamate contacts are provided by residues R213 to Q218 and A306. C447 is a binding site for heme.

The protein belongs to the cytochrome P450 family. The cofactor is heme.

Its subcellular location is the membrane. The catalysed reaction is (E)-cinnamate + reduced [NADPH--hemoprotein reductase] + O2 = (E)-4-coumarate + oxidized [NADPH--hemoprotein reductase] + H2O + H(+). The protein operates within phenylpropanoid metabolism; trans-4-coumarate biosynthesis; trans-4-coumarate from trans-cinnamate: step 1/1. Functionally, catalyzes the first oxidative step of the phenylpropanoid pathway in higher plants by transforming trans-cinnamate into p-coumarate. The compounds formed by this pathway are essential components for lignification, pollination, and defense against ultraviolet light, predators and pathogens. The sequence is that of Trans-cinnamate 4-monooxygenase (CYP73A12) from Zinnia elegans (Garden zinnia).